We begin with the raw amino-acid sequence, 131 residues long: Major pollen allergen Pla l 1 (131 aa).

Cystine bridges form between Cys17–Cys86, Cys20–Cys131, and Cys42–Cys74. Residues His21, Asp45, Asp73, and Glu88 each contribute to the Zn(2+) site. Asn107 carries an N-linked (GlcNAc...) asparagine glycan.

It belongs to the Ole e I family. Exists in two variants: glycosylated and non-glycosylated. Carries a complex, major N-linked glycan, with a alpha-1,3-fucose residue in its structure and probably also a beta-1,2-xylose. The average modification of molecular mass due to glycosylation is approximately 969 Da.

Its subcellular location is the secreted. In Plantago lanceolata (English plantain), this protein is Major pollen allergen Pla l 1.